An 855-amino-acid polypeptide reads, in one-letter code: DNA mismatch repair protein MutS (855 aa).

G616–S623 provides a ligand contact to ATP.

This sequence belongs to the DNA mismatch repair MutS family.

This protein is involved in the repair of mismatches in DNA. It is possible that it carries out the mismatch recognition step. This protein has a weak ATPase activity. This Salmonella paratyphi A (strain ATCC 9150 / SARB42) protein is DNA mismatch repair protein MutS.